The primary structure comprises 179 residues: Large ribosomal subunit protein uL5 (179 aa).

This sequence belongs to the universal ribosomal protein uL5 family. Part of the 50S ribosomal subunit; part of the 5S rRNA/L5/L18/L25 subcomplex. Contacts the 5S rRNA and the P site tRNA. Forms a bridge to the 30S subunit in the 70S ribosome.

In terms of biological role, this is one of the proteins that bind and probably mediate the attachment of the 5S RNA into the large ribosomal subunit, where it forms part of the central protuberance. In the 70S ribosome it contacts protein S13 of the 30S subunit (bridge B1b), connecting the 2 subunits; this bridge is implicated in subunit movement. Contacts the P site tRNA; the 5S rRNA and some of its associated proteins might help stabilize positioning of ribosome-bound tRNAs. This Nitratidesulfovibrio vulgaris (strain ATCC 29579 / DSM 644 / CCUG 34227 / NCIMB 8303 / VKM B-1760 / Hildenborough) (Desulfovibrio vulgaris) protein is Large ribosomal subunit protein uL5.